The primary structure comprises 426 residues: MLDSKLLRGQLQEVADRLASRGFSLDVARIESLEERRKAVQTRTEQLQAERNARSKSIGQAKAKGEDIAPLMADVERMANELAAGKVELDGIQAELDGIVLTIPNLPDASVPVGASEDDNVEVRRWGTPRAFDFAIKDHVALGEISGGLDFEAAAKLSGARFAVLRGPIARLHRALAQFMINLHTGEHGYEEHYTPYLVQAPALQGTGQLPKFEEDLFKITREGEADFYLIPTAEVSLTNLVAGEIIDAKQLPLKLVAHTPCFRSEAGASGRDTRGMIRQHQFDKVEMVQVVEPSKSMEALEGLTANAERVLQLLELPYRVLALCTGDMGFGAVKTYDLEVWVPSQDKYREISSCSNCGDFQARRMQARWRNPETGKPELVHTLNGSGLAVGRTLVAVLENYQQADGSIRVPEVLKPYMGGVEVIR.

Residue 233 to 235 coordinates L-serine; sequence TAE. ATP is bound at residue 264–266; it reads RSE. Glu287 provides a ligand contact to L-serine. 351–354 lines the ATP pocket; the sequence is EISS. An L-serine-binding site is contributed by Ser387.

This sequence belongs to the class-II aminoacyl-tRNA synthetase family. Type-1 seryl-tRNA synthetase subfamily. As to quaternary structure, homodimer. The tRNA molecule binds across the dimer.

It localises to the cytoplasm. It catalyses the reaction tRNA(Ser) + L-serine + ATP = L-seryl-tRNA(Ser) + AMP + diphosphate + H(+). The catalysed reaction is tRNA(Sec) + L-serine + ATP = L-seryl-tRNA(Sec) + AMP + diphosphate + H(+). The protein operates within aminoacyl-tRNA biosynthesis; selenocysteinyl-tRNA(Sec) biosynthesis; L-seryl-tRNA(Sec) from L-serine and tRNA(Sec): step 1/1. In terms of biological role, catalyzes the attachment of serine to tRNA(Ser). Is also able to aminoacylate tRNA(Sec) with serine, to form the misacylated tRNA L-seryl-tRNA(Sec), which will be further converted into selenocysteinyl-tRNA(Sec). This is Serine--tRNA ligase from Pseudomonas putida (strain W619).